The chain runs to 455 residues: UDP-N-acetylmuramoylalanine--D-glutamate ligase (455 aa).

G119 to T125 provides a ligand contact to ATP.

Belongs to the MurCDEF family.

It localises to the cytoplasm. The catalysed reaction is UDP-N-acetyl-alpha-D-muramoyl-L-alanine + D-glutamate + ATP = UDP-N-acetyl-alpha-D-muramoyl-L-alanyl-D-glutamate + ADP + phosphate + H(+). The protein operates within cell wall biogenesis; peptidoglycan biosynthesis. In terms of biological role, cell wall formation. Catalyzes the addition of glutamate to the nucleotide precursor UDP-N-acetylmuramoyl-L-alanine (UMA). The protein is UDP-N-acetylmuramoylalanine--D-glutamate ligase of Listeria monocytogenes serovar 1/2a (strain ATCC BAA-679 / EGD-e).